A 304-amino-acid chain; its full sequence is Cyclin-dependent kinase 3 (304 aa).

The Protein kinase domain occupies 4-286 (FQKVEKIGEG…AKTALAHPYF (283 aa)). Residues 10–18 (IGEGTYGVV) and Lys33 contribute to the ATP site. Asp127 functions as the Proton acceptor in the catalytic mechanism.

This sequence belongs to the protein kinase superfamily. CMGC Ser/Thr protein kinase family. CDC2/CDKX subfamily. As to quaternary structure, interacts with CABLES1 and ATF1. Binding to CCNC/cyclin-C promotes RB1 phosphorylation. Binds to CABLES2.

The catalysed reaction is L-seryl-[protein] + ATP = O-phospho-L-seryl-[protein] + ADP + H(+). It catalyses the reaction L-threonyl-[protein] + ATP = O-phospho-L-threonyl-[protein] + ADP + H(+). In terms of biological role, serine/threonine-protein kinase that plays a critical role in the control of the eukaryotic cell cycle; involved in G0-G1 and G1-S cell cycle transitions. Interacts with CCNC/cyclin-C during interphase. Phosphorylates histone H1, ATF1, RB1 and CABLES1. ATF1 phosphorylation triggers ATF1 transactivation and transcriptional activities, and promotes cell proliferation and transformation. CDK3/cyclin-C mediated RB1 phosphorylation is required for G0-G1 transition. Promotes G1-S transition probably by contributing to the activation of E2F1, E2F2 and E2F3 in a RB1-independent manner. The sequence is that of Cyclin-dependent kinase 3 (Cdk3) from Mus musculus (Mouse).